Consider the following 271-residue polypeptide: Transmembrane protein 33 homolog (271 aa).

The tract at residues 1–32 is disordered; it reads MVEIVEEPDDHQSSSTGAGSSGSSSAPPPPPP. Low complexity predominate over residues 13-25; the sequence is SSSTGAGSSGSSS. 3 helical membrane-spanning segments follow: residues 56-76, 125-145, and 180-200; these read VLTV…VPAH, VVFL…IYAA, and ALGI…SLIF.

It belongs to the PER33/POM33 family.

It is found in the membrane. The polypeptide is Transmembrane protein 33 homolog (Caenorhabditis elegans).